A 152-amino-acid polypeptide reads, in one-letter code: Globin, minor (152 aa).

Residues 12-152 form the Globin domain; that stretch reads VNNSYHKDLL…ALIAVVQAAL (141 aa). His104 contributes to the heme b binding site.

It belongs to the globin family.

The chain is Globin, minor from Anadara trapezia (Sydney cockle).